The chain runs to 155 residues: Immunoglobulin domain-containing protein oig-4 (155 aa).

The first 22 residues, methionine 1–serine 22, serve as a signal peptide directing secretion. 2 N-linked (GlcNAc...) asparagine glycosylation sites follow: asparagine 55 and asparagine 114. Residues glycine 73–threonine 154 enclose the Ig-like C2-type domain. An intrachain disulfide couples cysteine 80 to cysteine 136.

As to quaternary structure, interacts with the non-alpha subunit of nicotinic acetylcholine receptor unc-29 and lev-10 to stabilize the complex formed between unc-29 and lev-10. As to expression, expressed in body wall muscle cells, the pharyngeal muscle cell pm6 and in four head neurons.

The protein resides in the synapse. The protein localises to the secreted. Its function is as follows. Required for the localization of acetylcholine receptors at neuromuscular junctions and for subsequently controlling the response evoked by receptor stimulation. In Caenorhabditis elegans, this protein is Immunoglobulin domain-containing protein oig-4.